A 169-amino-acid chain; its full sequence is Diuretic hormone 44 (169 aa).

The first 18 residues, 1–18 (MILLGILASTTIIGLTSS), serve as a signal peptide directing secretion. The propeptide occupies 19–96 (APLSSYERRD…ARRKQERDQR (78 aa)). Positions 83-108 (MLELARRKQERDQRQIEENRRFLENI) form a coiled coil. The residue at position 97 (Q97) is a Pyrrolidone carboxylic acid. Isoleucine amide is present on I108. A propeptide spanning residues 109 to 169 (GKRSVPVSDA…RVQANELRLL (61 aa)) is cleaved from the precursor.

Residues Ile-66 to Gly-109 may constitute another form of the DH44 peptide, which has not been detected yet. In terms of tissue distribution, expressed in brain, ventral ganglia and the retrocerebral complex (at protein level).

Its subcellular location is the secreted. In terms of biological role, regulation of fluid secretion. The protein is Diuretic hormone 44 of Camponotus floridanus (Florida carpenter ant).